We begin with the raw amino-acid sequence, 644 residues long: Low affinity sulfate transporter 3 (644 aa).

Polar residues predominate over residues 1-19; that stretch reads MSSLGTEQFSERSQWVLNS. The interval 1 to 20 is disordered; that stretch reads MSSLGTEQFSERSQWVLNSP. The next 13 helical transmembrane spans lie at 50–70, 76–96, 99–119, 124–144, 156–176, 179–199, 242–262, 268–288, 328–348, 394–414, 418–438, 455–475, and 518–538; these read AVSF…YSAT, LLSG…YANL, LDPQ…ALMG, IAIG…PKVI, LVFT…VLRL, LVDF…AIVI, PLNF…RFIG, FFWL…LIVF, IGLI…RSFA, CKTA…LELF, LYYT…PGLI, LACL…GLLI, and PGIL…AGFV. Residues 511-635 enclose the STAS domain; the sequence is YPMAVTTPGI…LTVAEAVDAC (125 aa).

It belongs to the SLC26A/SulP transporter (TC 2.A.53) family.

The protein resides in the membrane. Its function is as follows. Low-affinity H(+)/sulfate cotransporter which may be involved in the internal transport of sulfate between cellular or subcellular compartments within the plant. This Stylosanthes hamata (Caribbean stylo) protein is Low affinity sulfate transporter 3 (ST3).